The following is a 476-amino-acid chain: Beta-amyrin 28-monooxygenase (476 aa).

A helical membrane pass occupies residues 2–22 (ELLYVCLVCVFVFLVSLLLLY). Cys-421 is a binding site for heme.

It belongs to the cytochrome P450 family. Requires heme as cofactor. Specifically expressed in roots.

Its subcellular location is the membrane. The enzyme catalyses beta-amyrin + 3 reduced [NADPH--hemoprotein reductase] + 3 O2 = oleanolate + 3 oxidized [NADPH--hemoprotein reductase] + 4 H2O + 4 H(+). In terms of biological role, catalyzes the carboxylation of beta-amyrin at the C-28 position to form oleanolate. Catalyzes the carboxylation of alpha-amyrin at the C-28 position to form ursolate. The protein is Beta-amyrin 28-monooxygenase (CYP716A44) of Solanum lycopersicum (Tomato).